The primary structure comprises 412 residues: CinA-like protein (412 aa).

This sequence belongs to the CinA family.

The sequence is that of CinA-like protein from Kosmotoga olearia (strain ATCC BAA-1733 / DSM 21960 / TBF 19.5.1).